The chain runs to 492 residues: Glutamyl-tRNA(Gln) amidotransferase subunit A (492 aa).

Catalysis depends on charge relay system residues Lys84 and Ser159. Ser183 acts as the Acyl-ester intermediate in catalysis.

This sequence belongs to the amidase family. GatA subfamily. Heterotrimer of A, B and C subunits.

It catalyses the reaction L-glutamyl-tRNA(Gln) + L-glutamine + ATP + H2O = L-glutaminyl-tRNA(Gln) + L-glutamate + ADP + phosphate + H(+). In terms of biological role, allows the formation of correctly charged Gln-tRNA(Gln) through the transamidation of misacylated Glu-tRNA(Gln) in organisms which lack glutaminyl-tRNA synthetase. The reaction takes place in the presence of glutamine and ATP through an activated gamma-phospho-Glu-tRNA(Gln). The sequence is that of Glutamyl-tRNA(Gln) amidotransferase subunit A from Anaeromyxobacter sp. (strain K).